We begin with the raw amino-acid sequence, 537 residues long: Cytochrome P450 CYP12A2 (537 aa).

C483 contributes to the heme binding site.

It belongs to the cytochrome P450 family. Heme serves as cofactor.

The chain is Cytochrome P450 CYP12A2 (CYP12A2) from Musca domestica (House fly).